We begin with the raw amino-acid sequence, 163 residues long: Putative pre-16S rRNA nuclease (163 aa).

The protein belongs to the YqgF nuclease family.

Its subcellular location is the cytoplasm. Functionally, could be a nuclease involved in processing of the 5'-end of pre-16S rRNA. This is Putative pre-16S rRNA nuclease from Rhodopseudomonas palustris (strain BisA53).